The following is a 626-amino-acid chain: Putative folylpolyglutamate synthase (626 aa).

Gly144–Ser147 contacts ATP. Positions 168, 235, and 263 each coordinate Mg(2+). Arg412 and Asp430 together coordinate ATP.

It belongs to the folylpolyglutamate synthase family.

The enzyme catalyses (6S)-5,6,7,8-tetrahydrofolyl-(gamma-L-Glu)(n) + L-glutamate + ATP = (6S)-5,6,7,8-tetrahydrofolyl-(gamma-L-Glu)(n+1) + ADP + phosphate + H(+). It participates in cofactor biosynthesis; tetrahydrofolylpolyglutamate biosynthesis. Functionally, conversion of folates to polyglutamate derivatives. The protein is Putative folylpolyglutamate synthase (folC) of Dictyostelium discoideum (Social amoeba).